Reading from the N-terminus, the 359-residue chain is Glucose 1-dehydrogenase (359 aa).

C39 is a Zn(2+) binding site. T41 serves as a coordination point for substrate. Zn(2+) is bound by residues H64 and E65. 2 residues coordinate substrate: E116 and E152. E152 lines the Zn(2+) pocket. 183–186 (AGPI) is an NADP(+) binding site.

This sequence belongs to the zinc-containing alcohol dehydrogenase family. Glucose 1-dehydrogenase subfamily. Zn(2+) serves as cofactor.

It carries out the reaction D-glucose + NAD(+) = D-glucono-1,5-lactone + NADH + H(+). It catalyses the reaction D-glucose + NADP(+) = D-glucono-1,5-lactone + NADPH + H(+). Catalyzes the NAD(P)(+)-dependent oxidation of D-glucose to D-gluconate via gluconolactone. Can utilize both NAD(+) and NADP(+) as electron acceptor. Is involved in the degradation of glucose through a non-phosphorylative variant of the Entner-Doudoroff pathway. This chain is Glucose 1-dehydrogenase, found in Methanocella arvoryzae (strain DSM 22066 / NBRC 105507 / MRE50).